Here is a 456-residue protein sequence, read N- to C-terminus: Proline--tRNA ligase (456 aa).

Belongs to the class-II aminoacyl-tRNA synthetase family. ProS type 3 subfamily. Homodimer.

The protein localises to the cytoplasm. The enzyme catalyses tRNA(Pro) + L-proline + ATP = L-prolyl-tRNA(Pro) + AMP + diphosphate. Functionally, catalyzes the attachment of proline to tRNA(Pro) in a two-step reaction: proline is first activated by ATP to form Pro-AMP and then transferred to the acceptor end of tRNA(Pro). This chain is Proline--tRNA ligase, found in Methanococcus aeolicus (strain ATCC BAA-1280 / DSM 17508 / OCM 812 / Nankai-3).